The primary structure comprises 153 residues: Glucose-6-phosphate 1-dehydrogenase (153 aa).

2 residues coordinate NADP(+): Arg21 and Lys120. Position 120 (Lys120) interacts with D-glucose 6-phosphate.

This sequence belongs to the glucose-6-phosphate dehydrogenase family.

Its subcellular location is the cytoplasm. The protein localises to the cytosol. It catalyses the reaction D-glucose 6-phosphate + NADP(+) = 6-phospho-D-glucono-1,5-lactone + NADPH + H(+). The protein operates within carbohydrate degradation; pentose phosphate pathway; D-ribulose 5-phosphate from D-glucose 6-phosphate (oxidative stage): step 1/3. Its function is as follows. Cytosolic glucose-6-phosphate dehydrogenase that catalyzes the first and rate-limiting step of the oxidative branch within the pentose phosphate pathway/shunt, an alternative route to glycolysis for the dissimilation of carbohydrates and a major source of reducing power and metabolic intermediates for fatty acid and nucleic acid biosynthetic processes. The chain is Glucose-6-phosphate 1-dehydrogenase (ZW) from Culex pipiens (House mosquito).